The following is a 425-amino-acid chain: MRPVDLLIVGAGELVTMAGGPRRGERMKDAAVIPGGALAARDGRIVAVGPEDEVLRTVETGPDTRVIDARGRAVIPGFVDPHTHLCFAGDRAEEFALRLGGATYQEIAARGGGILETVRATRAASQAELVELGLARLDQLALNGTTTVEVKSGYGLSLADELKQLRAIRAMARRHPLTVVPTFMGAHEVPPEYRSRREAYVDLLVEEMLPAVAAEPGLARFADVFTEAGVFSVAESRRILERAKALGFGVKVHADELSDLGGAALAAELGAISAEHLLHASDEALAKLAEAGTVAVCLPGTSFCLMNAPYARARRMIELGCTVALGSDYNPGSCPAYAMPFIITLACMHLGLNPSEALAAATINAAAAIGMEAEVGSLEVGKLADVVILSTPTHWHIPYHMGMGVVAKVVKRGRLIVDEGKVRRR.

His-82 and His-84 together coordinate Fe(3+). His-82 and His-84 together coordinate Zn(2+). Arg-91, Tyr-154, and His-187 together coordinate 4-imidazolone-5-propanoate. Position 154 (Tyr-154) interacts with N-formimidoyl-L-glutamate. A Fe(3+)-binding site is contributed by His-253. His-253 lines the Zn(2+) pocket. Residue Glu-256 coordinates 4-imidazolone-5-propanoate. Position 328 (Asp-328) interacts with Fe(3+). Zn(2+) is bound at residue Asp-328. N-formimidoyl-L-glutamate-binding residues include Asn-330 and Gly-332. Position 333 (Ser-333) interacts with 4-imidazolone-5-propanoate.

Belongs to the metallo-dependent hydrolases superfamily. HutI family. The cofactor is Zn(2+). Fe(3+) is required as a cofactor.

Its subcellular location is the cytoplasm. It catalyses the reaction 4-imidazolone-5-propanoate + H2O = N-formimidoyl-L-glutamate. It functions in the pathway amino-acid degradation; L-histidine degradation into L-glutamate; N-formimidoyl-L-glutamate from L-histidine: step 3/3. Its function is as follows. Catalyzes the hydrolytic cleavage of the carbon-nitrogen bond in imidazolone-5-propanoate to yield N-formimidoyl-L-glutamate. It is the third step in the universal histidine degradation pathway. The protein is Imidazolonepropionase of Symbiobacterium thermophilum (strain DSM 24528 / JCM 14929 / IAM 14863 / T).